A 450-amino-acid chain; its full sequence is Gluconate permease (450 aa).

12 consecutive transmembrane segments (helical) span residues 6 to 26 (HDAYLLLDALVTIIGLIVLIT), 30 to 50 (VHPFIALIIAAGFLGLTSGMP), 60 to 80 (DGFGGVLGFVGVILALGTMLG), 116 to 136 (VGIPLFFEIGFILLIPLVFIV), 142 to 162 (VSLIKIGIPLLAGLSAVHGLV), 183 to 203 (ILYGLIVALPTAAIAGPLFGA), 233 to 253 (FGVTLATVLLPVFLMLLKTFA), 269 to 289 (MIGHPISALLLALLVALYTFG), 312 to 332 (AIVMIIGAGGGFKQMLVASGV), 338 to 358 (HLAVNAQISPILLAWLVAAVI), 366 to 386 (TVATITGAGIVVPVIDLIPGV), and 430 to 450 (AMETILSVVGLVFILLLSLVL).

This sequence belongs to the GntP permease family.

Its subcellular location is the cell inner membrane. It functions in the pathway carbohydrate acid metabolism; D-gluconate degradation. This Pseudomonas aeruginosa (strain ATCC 15692 / DSM 22644 / CIP 104116 / JCM 14847 / LMG 12228 / 1C / PRS 101 / PAO1) protein is Gluconate permease (gnuT).